Consider the following 440-residue polypeptide: GTPase Der (440 aa).

EngA-type G domains are found at residues 3-167 and 176-351; these read PIIA…PYDR and TRIA…EQYC. GTP contacts are provided by residues 9–16, 56–60, 119–122, 182–189, 229–233, and 294–297; these read GRPNVGKS, DTGGF, NKVD, DTAGI, and NKWD. The KH-like domain occupies 352-436; sequence KRVTTGELNR…PLKLIFRGRD (85 aa).

The protein belongs to the TRAFAC class TrmE-Era-EngA-EngB-Septin-like GTPase superfamily. EngA (Der) GTPase family. In terms of assembly, associates with the 50S ribosomal subunit.

Its function is as follows. GTPase that plays an essential role in the late steps of ribosome biogenesis. The protein is GTPase Der of Citrifermentans bemidjiense (strain ATCC BAA-1014 / DSM 16622 / JCM 12645 / Bem) (Geobacter bemidjiensis).